Consider the following 388-residue polypeptide: S-adenosylmethionine synthase (388 aa).

Residue His-17 participates in ATP binding. Asp-19 contacts Mg(2+). Position 45 (Glu-45) interacts with K(+). Positions 58 and 102 each coordinate L-methionine. The segment at 102–112 is flexible loop; it reads QSVHIAQGVDA. Residues 167-169, Asp-241, 247-248, Ala-264, and Lys-268 each bind ATP; these read DAK and RK. Asp-241 is an L-methionine binding site. Lys-272 lines the L-methionine pocket.

It belongs to the AdoMet synthase family. In terms of assembly, homotetramer; dimer of dimers. It depends on Mg(2+) as a cofactor. Requires K(+) as cofactor.

The protein resides in the cytoplasm. It catalyses the reaction L-methionine + ATP + H2O = S-adenosyl-L-methionine + phosphate + diphosphate. The protein operates within amino-acid biosynthesis; S-adenosyl-L-methionine biosynthesis; S-adenosyl-L-methionine from L-methionine: step 1/1. Its function is as follows. Catalyzes the formation of S-adenosylmethionine (AdoMet) from methionine and ATP. The overall synthetic reaction is composed of two sequential steps, AdoMet formation and the subsequent tripolyphosphate hydrolysis which occurs prior to release of AdoMet from the enzyme. This chain is S-adenosylmethionine synthase, found in Maricaulis maris (strain MCS10) (Caulobacter maris).